The primary structure comprises 722 residues: Polyribonucleotide nucleotidyltransferase (722 aa).

Residues aspartate 487 and aspartate 493 each contribute to the Mg(2+) site. Residues 554–613 enclose the KH domain; that stretch reads PRMVSFKIHPDKIREVIGKGGATIQALTKETGCSIDIKDDGTVTIASTSAEGMAEAKARI. In terms of domain architecture, S1 motif spans 623 to 691; sequence GKIYEGPVVK…ERGRLRLSLK (69 aa).

The protein belongs to the polyribonucleotide nucleotidyltransferase family. The cofactor is Mg(2+).

Its subcellular location is the cytoplasm. It catalyses the reaction RNA(n+1) + phosphate = RNA(n) + a ribonucleoside 5'-diphosphate. Functionally, involved in mRNA degradation. Catalyzes the phosphorolysis of single-stranded polyribonucleotides processively in the 3'- to 5'-direction. The polypeptide is Polyribonucleotide nucleotidyltransferase (Polynucleobacter necessarius subsp. necessarius (strain STIR1)).